Here is a 247-residue protein sequence, read N- to C-terminus: Molybdate/tungstate transport system permease protein WtpB (247 aa).

Topologically, residues 1–8 (MRRDYTLY) are cytoplasmic. A helical transmembrane segment spans residues 9-29 (LFAALGTFLIAYIAVPIAVIF). The Extracellular segment spans residues 30 to 55 (LKQASDVEMLVKTLHDPYVIEAIRNS). In terms of domain architecture, ABC transmembrane type-1 spans 52-238 (IRNSLLTATA…SLSLGIFVIL (187 aa)). The helical transmembrane segment at 56 to 76 (LLTATATALIALLFGVPLGYV) threads the bilayer. The Cytoplasmic segment spans residues 77–90 (LARKDFPGKSAVQA). The helical transmembrane segment at 91-111 (LVDVPIVIPHSVVGIMLLVTF) threads the bilayer. Residues 112-114 (SNS) lie on the Extracellular side of the membrane. The helical transmembrane segment at 115 to 135 (ILDSYKGIVAAMLFVSAPFTI) threads the bilayer. At 136–163 (NAARDGFLAVDEKLEAVARTLGASRWRA) the chain is on the cytoplasmic side. A helical transmembrane segment spans residues 164-184 (FLSISLPMAFPSIASGAIMTW). Residues 185–222 (ARAISEVGAILIVAYYPKTAQVLILEYFNNYGLRASRP) are Extracellular-facing. Residues 223-243 (IAVIMVSLSLGIFVILRWLVG) traverse the membrane as a helical segment. The Cytoplasmic segment spans residues 244-247 (RKNA).

It belongs to the binding-protein-dependent transport system permease family. As to quaternary structure, the complex is composed of two ATP-binding proteins (WtpC), two transmembrane proteins (WtpB) and a solute-binding protein (WtpA).

It localises to the cell membrane. Part of the ABC transporter complex WtpABC involved in molybdate/tungstate import. Probably responsible for the translocation of the substrate across the membrane. The sequence is that of Molybdate/tungstate transport system permease protein WtpB (wtpB) from Thermococcus kodakarensis (strain ATCC BAA-918 / JCM 12380 / KOD1) (Pyrococcus kodakaraensis (strain KOD1)).